A 303-amino-acid chain; its full sequence is Sulfate adenylyltransferase subunit 2 (303 aa).

The protein belongs to the PAPS reductase family. CysD subfamily. Heterodimer composed of CysD, the smaller subunit, and CysN.

The catalysed reaction is sulfate + ATP + H(+) = adenosine 5'-phosphosulfate + diphosphate. It participates in sulfur metabolism; hydrogen sulfide biosynthesis; sulfite from sulfate: step 1/3. With CysN forms the ATP sulfurylase (ATPS) that catalyzes the adenylation of sulfate producing adenosine 5'-phosphosulfate (APS) and diphosphate, the first enzymatic step in sulfur assimilation pathway. APS synthesis involves the formation of a high-energy phosphoric-sulfuric acid anhydride bond driven by GTP hydrolysis by CysN coupled to ATP hydrolysis by CysD. The protein is Sulfate adenylyltransferase subunit 2 of Sulfurovum sp. (strain NBC37-1).